A 124-amino-acid chain; its full sequence is Small ribosomal subunit protein bS16 (124 aa).

The tract at residues 80 to 124 is disordered; sequence AGLAKRPARNNPTKAQPGKKAQERAAEAKQKAEEAAAAASEAAAE. A compositionally biased stretch (basic and acidic residues) spans 99-113; it reads KAQERAAEAKQKAEE. Residues 114–124 are compositionally biased toward low complexity; that stretch reads AAAAASEAAAE.

Belongs to the bacterial ribosomal protein bS16 family.

The sequence is that of Small ribosomal subunit protein bS16 from Rhizobium meliloti (strain 1021) (Ensifer meliloti).